Consider the following 574-residue polypeptide: Squalene monooxygenase (574 aa).

Over 1-20 (MWTFLGIATFTYFYKKFGDF) the chain is Cytoplasmic. An interaction with MARCHF6 region spans residues 1 to 100 (MWTFLGIATF…EQLEARRRRK (100 aa)). Residues 21–41 (ITLANREVLLCVLVFLSLGLV) lie within the membrane without spanning it. Topologically, residues 42 to 574 (LSYRCRHRNG…IYSEMKYMVH (533 aa)) are cytoplasmic. The segment at 62–73 (QFALFSDILSGL) is required for degradation in response to high membrane cholesterol levels. The segment at 118-574 (TSSQNDPEVI…IYSEMKYMVH (457 aa)) is sufficient for enzyme activity. Residues 133–134 (VL), 153–154 (ER), arginine 161, phenylalanine 166, arginine 234, valine 250, aspartate 408, and methionine 421 each bind FAD. The segment at 516–574 (PLVLIGHFFAVAIYAVYFCFKSEPWITKPRALLSSGAVLYKACSVIFPLIYSEMKYMVH) is hydrophobic; mediates interaction with membranes.

Belongs to the squalene monooxygenase family. As to quaternary structure, interacts (via N-terminal domain) with MARCHF6. Interacts with SMIM22; this interaction modulates lipid droplet formation. FAD is required as a cofactor. Ubiquitinated by MARCHF6 in response to high cholesterol levels in intracellular membranes, leading to proteasomal degradation. In terms of tissue distribution, detected in liver (at protein level).

It localises to the microsome membrane. The protein localises to the endoplasmic reticulum membrane. It catalyses the reaction squalene + reduced [NADPH--hemoprotein reductase] + O2 = (S)-2,3-epoxysqualene + oxidized [NADPH--hemoprotein reductase] + H2O + H(+). It functions in the pathway terpene metabolism; lanosterol biosynthesis; lanosterol from farnesyl diphosphate: step 2/3. With respect to regulation, inhibited by NB-598 ((E)N-ethyl-N-(6,6-dimethyl-2-hepten-4-ynyl)-3-[(3,3'-bi-thiophen-5-yl)methoxy]benzene-methanamine). Contrary to fungal enzymes, the mammalian enzyme is only slightly inhibited by terbinafine. Inhibited by tellurite, tellurium dioxide, selenite, and selenium dioxide. In terms of biological role, catalyzes the stereospecific oxidation of squalene to (S)-2,3-epoxysqualene, and is considered to be a rate-limiting enzyme in steroid biosynthesis. The chain is Squalene monooxygenase (SQLE) from Homo sapiens (Human).